A 1037-amino-acid polypeptide reads, in one-letter code: Sentrin-specific protease 7 (1037 aa).

The span at 1–10 (MDRARPGRRR) shows a compositional bias: basic residues. Disordered regions lie at residues 1–27 (MDRA…SSPA) and 185–399 (SDTA…ENSS). Phosphoserine is present on residues Ser12, Ser13, and Ser25. The segment covering 192 to 208 (SEQLSSSSDGSLESCQS) has biased composition (low complexity). Residues 272 to 282 (GTSNKNTSYSY) show a composition bias toward polar residues. Basic residues predominate over residues 290-300 (VSRKRKKRGRS). Composition is skewed to basic and acidic residues over residues 301–321 (NFHD…HTKE) and 328–341 (VSRK…DSHQ). A compositionally biased stretch (low complexity) spans 379–399 (ASSPNKSLESSASSEVSENSS). Ser434 and Ser435 each carry phosphoserine. Residues 747 to 1037 (LGVTNEDLEC…HLQQQKGGSC (291 aa)) are protease. The active site involves His847. The disordered stretch occupies residues 873–909 (QFQGQQSQHDHKMTDNDPHTTSTVSTSAEDSQSTEVN). Basic and acidic residues predominate over residues 880–890 (QHDHKMTDNDP). Residues 891-909 (HTTSTVSTSAEDSQSTEVN) are compositionally biased toward polar residues. Asp926 is an active-site residue. Cys979 acts as the Nucleophile in catalysis.

This sequence belongs to the peptidase C48 family.

Its subcellular location is the cytoplasm. In terms of biological role, protease that acts as a positive regulator of the cGAS-STING pathway by catalyzing desumoylation of CGAS. Desumoylation of CGAS promotes DNA-binding activity of CGAS, subsequent oligomerization and activation. Deconjugates SUMO2 and SUMO3 from targeted proteins, but not SUMO1. Catalyzes the deconjugation of poly-SUMO2 and poly-SUMO3 chains. Has very low efficiency in processing full-length SUMO proteins to their mature forms. In Mus musculus (Mouse), this protein is Sentrin-specific protease 7.